Reading from the N-terminus, the 1180-residue chain is Lon protease homolog 2, peroxisomal (1180 aa).

One can recognise a Lon N-terminal domain in the interval 19–366 (LPTCKLDSNL…ELINMINQLI (348 aa)). The segment at 416–465 (PISNRGNIKSFNNSENGNNNKTNGSGITSRRPKSNEDGGEVYDEEDDDEE) is disordered. Over residues 422–444 (NIKSFNNSENGNNNKTNGSGITS) the composition is skewed to low complexity. Over residues 452 to 465 (DGGEVYDEEDDDEE) the composition is skewed to acidic residues. Residue 667-674 (GPPGTGKT) coordinates ATP. Residues 924–1163 (NSRVGIVNGL…YDVMKILWGE (240 aa)) form the Lon proteolytic domain. Residues serine 1032 and lysine 1075 contribute to the active site.

The protein belongs to the peptidase S16 family.

The protein localises to the peroxisome matrix. It catalyses the reaction Hydrolysis of proteins in presence of ATP.. Its function is as follows. ATP-dependent serine protease that mediates the selective degradation of misfolded and unassembled polypeptides in the peroxisomal matrix. Necessary for type 2 peroxisome targeting signal (PTS2)-containing protein processing and facilitates peroxisome matrix protein import. The chain is Lon protease homolog 2, peroxisomal from Scheffersomyces stipitis (strain ATCC 58785 / CBS 6054 / NBRC 10063 / NRRL Y-11545) (Yeast).